Here is a 130-residue protein sequence, read N- to C-terminus: uncharacterized protein (130 aa).

Residues 19–73 enclose the HTH cro/C1-type domain; sequence IYSLRLAKGLSRQQLAEVIDVTHQQLQKYEKAINRISVGRLVLIAEALDRNIDYF. Positions 30–49 form a DNA-binding region, H-T-H motif; sequence RQQLAEVIDVTHQQLQKYEK.

This is an uncharacterized protein from Rickettsia prowazekii (strain Madrid E).